The following is a 367-amino-acid chain: Ribosomal lysine N-methyltransferase 5 (367 aa).

The interval 55–74 (EGGRKKKRVRRRNKASSVEE) is disordered. Residues 58 to 68 (RKKKRVRRRNK) show a composition bias toward basic residues. Residues W110, 170–172 (GAG), D192, W256, and M288 contribute to the S-adenosyl-L-methionine site.

This sequence belongs to the class I-like SAM-binding methyltransferase superfamily. RKM5 family.

Its function is as follows. S-adenosyl-L-methionine-dependent protein-lysine N-methyltransferase that monomethylates 60S ribosomal protein L1 (RPL1A and RPL1B) at 'Lys-46'. The protein is Ribosomal lysine N-methyltransferase 5 (RKM5) of Saccharomyces cerevisiae (strain VIN 13) (Baker's yeast).